A 271-amino-acid chain; its full sequence is 3-methyl-2-oxobutanoate hydroxymethyltransferase (271 aa).

2 residues coordinate Mg(2+): Asp-49 and Asp-88. 3-methyl-2-oxobutanoate contacts are provided by residues 49-50, Asp-88, and Lys-118; that span reads DS. Residue Glu-120 coordinates Mg(2+). The active-site Proton acceptor is the Glu-187.

Belongs to the PanB family. As to quaternary structure, homodecamer; pentamer of dimers. Mg(2+) serves as cofactor.

It is found in the cytoplasm. The catalysed reaction is 3-methyl-2-oxobutanoate + (6R)-5,10-methylene-5,6,7,8-tetrahydrofolate + H2O = 2-dehydropantoate + (6S)-5,6,7,8-tetrahydrofolate. It participates in cofactor biosynthesis; (R)-pantothenate biosynthesis; (R)-pantoate from 3-methyl-2-oxobutanoate: step 1/2. Its function is as follows. Catalyzes the reversible reaction in which hydroxymethyl group from 5,10-methylenetetrahydrofolate is transferred onto alpha-ketoisovalerate to form ketopantoate. In Bartonella tribocorum (strain CIP 105476 / IBS 506), this protein is 3-methyl-2-oxobutanoate hydroxymethyltransferase.